Consider the following 249-residue polypeptide: Proteasome subunit alpha type-7-B (249 aa).

It belongs to the peptidase T1A family. In terms of assembly, the 26S proteasome consists of a 20S proteasome core and two 19S regulatory subunits. The 20S proteasome core is composed of 28 subunits that are arranged in four stacked rings, resulting in a barrel-shaped structure. The two end rings are each formed by seven alpha subunits, and the two central rings are each formed by seven beta subunits. The catalytic chamber with the active sites is on the inside of the barrel.

It localises to the cytoplasm. The protein localises to the nucleus. Its function is as follows. The proteasome is a multicatalytic proteinase complex which is characterized by its ability to cleave peptides with Arg, Phe, Tyr, Leu, and Glu adjacent to the leaving group at neutral or slightly basic pH. The proteasome has an ATP-dependent proteolytic activity. This Oryza sativa subsp. indica (Rice) protein is Proteasome subunit alpha type-7-B (PAD1).